The sequence spans 169 residues: S-ribosylhomocysteine lyase (169 aa).

Histidine 54, histidine 58, and cysteine 128 together coordinate Fe cation.

The protein belongs to the LuxS family. Homodimer. Requires Fe cation as cofactor.

It carries out the reaction S-(5-deoxy-D-ribos-5-yl)-L-homocysteine = (S)-4,5-dihydroxypentane-2,3-dione + L-homocysteine. Involved in the synthesis of autoinducer 2 (AI-2) which is secreted by bacteria and is used to communicate both the cell density and the metabolic potential of the environment. The regulation of gene expression in response to changes in cell density is called quorum sensing. Catalyzes the transformation of S-ribosylhomocysteine (RHC) to homocysteine (HC) and 4,5-dihydroxy-2,3-pentadione (DPD). In Shewanella pealeana (strain ATCC 700345 / ANG-SQ1), this protein is S-ribosylhomocysteine lyase.